We begin with the raw amino-acid sequence, 904 residues long: Phosphoenolpyruvate carboxylase (904 aa).

Residues H151 and K570 contribute to the active site.

This sequence belongs to the PEPCase type 1 family. The cofactor is Mg(2+).

The catalysed reaction is oxaloacetate + phosphate = phosphoenolpyruvate + hydrogencarbonate. Its function is as follows. Forms oxaloacetate, a four-carbon dicarboxylic acid source for the tricarboxylic acid cycle. The sequence is that of Phosphoenolpyruvate carboxylase from Xanthomonas campestris pv. campestris (strain 8004).